Here is a 313-residue protein sequence, read N- to C-terminus: Ribosomal RNA small subunit methyltransferase H (313 aa).

S-adenosyl-L-methionine-binding positions include 34–36, Asp53, Phe80, Asp101, and Gln108; that span reads GGH.

This sequence belongs to the methyltransferase superfamily. RsmH family.

Its subcellular location is the cytoplasm. The catalysed reaction is cytidine(1402) in 16S rRNA + S-adenosyl-L-methionine = N(4)-methylcytidine(1402) in 16S rRNA + S-adenosyl-L-homocysteine + H(+). In terms of biological role, specifically methylates the N4 position of cytidine in position 1402 (C1402) of 16S rRNA. The polypeptide is Ribosomal RNA small subunit methyltransferase H (Lacticaseibacillus paracasei (strain ATCC 334 / BCRC 17002 / CCUG 31169 / CIP 107868 / KCTC 3260 / NRRL B-441) (Lactobacillus paracasei)).